A 156-amino-acid polypeptide reads, in one-letter code: uncharacterized protein (156 aa).

Helical transmembrane passes span 7 to 29 (AQISVVLSTIIIMTYAFLSSYFL), 42 to 64 (YFALSNLLSLSLPFVCAWFPYLF), 69 to 88 (AVTGSALSAFGLFLFFAITS), 98 to 120 (AAIWVIYFFWLIGAALAGVYPAL), and 133 to 155 (ALVLSALFTVVVSFIIGFLISRI).

The protein resides in the cell membrane. This is an uncharacterized protein from Pasteurella multocida (strain Pm70).